The following is a 296-amino-acid chain: NAD kinase (296 aa).

Asp73 acts as the Proton acceptor in catalysis. NAD(+)-binding positions include 73–74, Lys78, 151–152, Arg178, Asp180, and 191–196; these read DG, NE, and TAHAMS.

The protein belongs to the NAD kinase family. A divalent metal cation is required as a cofactor.

It is found in the cytoplasm. It carries out the reaction NAD(+) + ATP = ADP + NADP(+) + H(+). Functionally, involved in the regulation of the intracellular balance of NAD and NADP, and is a key enzyme in the biosynthesis of NADP. Catalyzes specifically the phosphorylation on 2'-hydroxyl of the adenosine moiety of NAD to yield NADP. The chain is NAD kinase from Francisella tularensis subsp. novicida (strain U112).